Here is an 80-residue protein sequence, read N- to C-terminus: MKADIHPTYAETTVLCGCGNTFQTRSTKDGGRIVVEVCSQCHPFYTGKQKILDSGGRVARFEKRYGKRKAGAEKAESADK.

Zn(2+) contacts are provided by cysteine 16, cysteine 18, cysteine 38, and cysteine 41.

It belongs to the bacterial ribosomal protein bL31 family. Type A subfamily. In terms of assembly, part of the 50S ribosomal subunit. Zn(2+) serves as cofactor.

In terms of biological role, binds the 23S rRNA. This chain is Large ribosomal subunit protein bL31, found in Mycobacterium avium (strain 104).